We begin with the raw amino-acid sequence, 1135 residues long: Peroxisomal ATPase PEX6 (1135 aa).

853-860 (GPPGTGKT) contacts ATP.

It belongs to the AAA ATPase family. As to quaternary structure, interacts with PEX1; forming the PEX1-PEX6 AAA ATPase complex, which is composed of a heterohexamer formed by a trimer of PEX1-PEX6 dimers.

The protein localises to the cytoplasm. It localises to the cytosol. The protein resides in the peroxisome membrane. It catalyses the reaction ATP + H2O = ADP + phosphate + H(+). Its function is as follows. Component of the PEX1-PEX6 AAA ATPase complex, a protein dislocase complex that mediates the ATP-dependent extraction of the PEX5 receptor from peroxisomal membranes, an essential step for PEX5 recycling. Specifically recognizes PEX5 monoubiquitinated at 'Cys-6', and pulls it out of the peroxisome lumen through the PEX2-PEX10-PEX12 retrotranslocation channel. Extraction by the PEX1-PEX6 AAA ATPase complex is accompanied by unfolding of the TPR repeats and release of bound cargo from PEX5. This chain is Peroxisomal ATPase PEX6 (PEX6), found in Pichia angusta (Yeast).